Consider the following 55-residue polypeptide: A-type ATP synthase subunit G (55 aa).

As to quaternary structure, has multiple subunits, A(3), B(3), C, D, E, F, G, I and K(x); there may be a few other subunits as well.

It is found in the cell membrane. Its function is as follows. Component of the A-type ATP synthase that produces ATP from ADP in the presence of a proton gradient across the membrane. This chain is A-type ATP synthase subunit G (atpG), found in Methanosarcina mazei (strain ATCC BAA-159 / DSM 3647 / Goe1 / Go1 / JCM 11833 / OCM 88) (Methanosarcina frisia).